Consider the following 226-residue polypeptide: CRISPR-associated endonuclease Cas3-HD (226 aa).

The 196-residue stretch at 9-204 (GRDCLQTYED…HVLTVCDNWG (196 aa)) folds into the HD Cas3-type domain. 4 residues coordinate Mg(2+): Asp-56, His-74, His-101, and His-102.

This sequence belongs to the CRISPR-associated nuclease Cas3-HD family. Monomer. Can form a Cascade complex with Csa5, Cas7, Cas5a, Cas3 and Cas8a2. Requires Mg(2+) as cofactor.

Functionally, CRISPR (clustered regularly interspaced short palindromic repeat), is an adaptive immune system that provides protection against mobile genetic elements (viruses, transposable elements and conjugative plasmids). CRISPR clusters contain sequences complementary to antecedent mobile elements and target invading nucleic acids. CRISPR clusters are transcribed and processed into CRISPR RNA (crRNA). Cas3 plus Cascade participate in CRISPR interference, the third stage of CRISPR immunity. Acts as a ssDNA and ssRNA nuclease, probably with both exo- and endonuclease activities. Activity is higher for DNA than RNA. This Thermoproteus tenax (strain ATCC 35583 / DSM 2078 / JCM 9277 / NBRC 100435 / Kra 1) protein is CRISPR-associated endonuclease Cas3-HD (cas3').